Here is a 309-residue protein sequence, read N- to C-terminus: uncharacterized protein (309 aa).

Residues 1–16 (MAGNSRRRGAVRKAGT) show a composition bias toward basic residues. Residues 1–70 (MAGNSRRRGA…AKRTEETETV (70 aa)) form a disordered region. 3 residues coordinate S-adenosyl-L-methionine: glycine 261, isoleucine 281, and leucine 290.

It belongs to the class IV-like SAM-binding methyltransferase superfamily. RNA methyltransferase TrmH family.

This is an uncharacterized protein from Mycolicibacterium paratuberculosis (strain ATCC BAA-968 / K-10) (Mycobacterium paratuberculosis).